We begin with the raw amino-acid sequence, 312 residues long: Glyoxylate/hydroxypyruvate reductase A (312 aa).

Arg227 is an active-site residue. His275 (proton donor) is an active-site residue.

This sequence belongs to the D-isomer specific 2-hydroxyacid dehydrogenase family. GhrA subfamily.

The protein localises to the cytoplasm. It carries out the reaction glycolate + NADP(+) = glyoxylate + NADPH + H(+). The catalysed reaction is (R)-glycerate + NAD(+) = 3-hydroxypyruvate + NADH + H(+). It catalyses the reaction (R)-glycerate + NADP(+) = 3-hydroxypyruvate + NADPH + H(+). Catalyzes the NADPH-dependent reduction of glyoxylate and hydroxypyruvate into glycolate and glycerate, respectively. The protein is Glyoxylate/hydroxypyruvate reductase A of Escherichia coli (strain 55989 / EAEC).